Consider the following 65-residue polypeptide: UPF0434 protein BH12860 (65 aa).

It belongs to the UPF0434 family.

This is UPF0434 protein BH12860 from Bartonella henselae (strain ATCC 49882 / DSM 28221 / CCUG 30454 / Houston 1) (Rochalimaea henselae).